A 179-amino-acid polypeptide reads, in one-letter code: Cytochrome b6-f complex iron-sulfur subunit (179 aa).

Residues 21–43 (LLTFGTVTGVALGALYPVVKYFI) form a helical membrane-spanning segment. The Rieske domain occupies 61 to 162 (GNDVSLSKFL…ANTVDDKIIL (102 aa)). Positions 108, 110, 126, and 129 each coordinate [2Fe-2S] cluster. Residues C113 and C128 are joined by a disulfide bond.

It belongs to the Rieske iron-sulfur protein family. The 4 large subunits of the cytochrome b6-f complex are cytochrome b6, subunit IV (17 kDa polypeptide, PetD), cytochrome f and the Rieske protein, while the 4 small subunits are PetG, PetL, PetM and PetN. The complex functions as a dimer. The cofactor is [2Fe-2S] cluster.

The protein resides in the cellular thylakoid membrane. The enzyme catalyses 2 oxidized [plastocyanin] + a plastoquinol + 2 H(+)(in) = 2 reduced [plastocyanin] + a plastoquinone + 4 H(+)(out). Its function is as follows. Component of the cytochrome b6-f complex, which mediates electron transfer between photosystem II (PSII) and photosystem I (PSI), cyclic electron flow around PSI, and state transitions. In Desmonostoc sp. (strain PCC 7906) (Nostoc sp. (strain PCC 7906)), this protein is Cytochrome b6-f complex iron-sulfur subunit.